Reading from the N-terminus, the 239-residue chain is Protein GUCD1 (239 aa).

This Mus musculus (Mouse) protein is Protein GUCD1 (Gucd1).